Here is a 126-residue protein sequence, read N- to C-terminus: Heavy metal-associated isoprenylated plant protein 14 (126 aa).

The 67-residue stretch at 3 to 69 (AKNAVLQLSI…LCNTEIVSVD (67 aa)) folds into the HMA domain. At cysteine 123 the chain carries Cysteine methyl ester. Cysteine 123 is lipidated: S-farnesyl cysteine. A propeptide spans 124–126 (VIM) (removed in mature form).

It belongs to the HIPP family.

Probable heavy-metal-binding protein. The protein is Heavy metal-associated isoprenylated plant protein 14 of Arabidopsis thaliana (Mouse-ear cress).